Here is a 137-residue protein sequence, read N- to C-terminus: Putative pre-16S rRNA nuclease (137 aa).

It belongs to the YqgF nuclease family.

The protein localises to the cytoplasm. Its function is as follows. Could be a nuclease involved in processing of the 5'-end of pre-16S rRNA. This chain is Putative pre-16S rRNA nuclease, found in Oceanobacillus iheyensis (strain DSM 14371 / CIP 107618 / JCM 11309 / KCTC 3954 / HTE831).